The chain runs to 31 residues: Cytochrome b6-f complex subunit 6 (31 aa).

Residues 3-23 traverse the membrane as a helical segment; that stretch reads AIVAYIGFLALFTGIAAGLLF.

Belongs to the PetL family. In terms of assembly, the 4 large subunits of the cytochrome b6-f complex are cytochrome b6, subunit IV (17 kDa polypeptide, PetD), cytochrome f and the Rieske protein, while the 4 small subunits are PetG, PetL, PetM and PetN. The complex functions as a dimer.

It localises to the cellular thylakoid membrane. Component of the cytochrome b6-f complex, which mediates electron transfer between photosystem II (PSII) and photosystem I (PSI), cyclic electron flow around PSI, and state transitions. PetL is important for photoautotrophic growth as well as for electron transfer efficiency and stability of the cytochrome b6-f complex. The protein is Cytochrome b6-f complex subunit 6 of Nostoc sp. (strain PCC 7120 / SAG 25.82 / UTEX 2576).